The following is a 538-amino-acid chain: Putative cysteine ligase BshC (538 aa).

Positions 462-533 form a coiled coil; the sequence is LDHLEKRLLK…DPLESNFKIL (72 aa).

The protein belongs to the BshC family.

The protein is Putative cysteine ligase BshC of Christiangramia forsetii (strain DSM 17595 / CGMCC 1.15422 / KT0803) (Gramella forsetii).